The following is a 317-amino-acid chain: Transcription factor EC (317 aa).

A disordered region spans residues 1 to 44 (MTLDHQILNQSFKRSHPPTPSSELLVQHGHPSPESDTGLTGNPL). The segment at 1-90 (MTLDHQILNQ…GLTSASCPSS (90 aa)) is necessary for transcriptional transactivation. Positions 34–43 (ESDTGLTGNP) are enriched in polar residues. The bHLH domain maps to 110-163 (QKKDNHNLIERRRRYNINYRIKELGTLIPKSNDPDMRWNKGTILKASVEYIKWL). Residues 241–317 (TSPELCDQAM…SFSSEDGDEL (77 aa)) are necessary for transcriptional transactivation. Residues 297 to 317 (PAVSKESSRRSSFSSEDGDEL) are disordered.

Belongs to the MiT/TFE family. Homodimer. Forms heterodimers with MITF and TFE3. Interacts with MITF.

Its subcellular location is the nucleus. Its function is as follows. Transcriptional regulator that acts as a repressor or an activator. Acts as a transcriptional repressor on minimal promoter containing element F (that includes an E-box sequence). Binds to element F in an E-box sequence-specific manner. Acts as a transcriptional transactivator on the proximal promoter region of the tartrate-resistant acid phosphatase (TRAP) E-box containing promoter. Collaborates with MITF in target gene activation. Acts as a transcriptional repressor on minimal promoter containing mu E3 enhancer sequence. Binds to mu E3 DNA sequence of the immunoglobulin heavy-chain gene enhancer. Binds DNA in a homo- or heterodimeric form. This Bos taurus (Bovine) protein is Transcription factor EC (TFEC).